We begin with the raw amino-acid sequence, 76 residues long: U14-hexatoxin-Hi1a (76 aa).

Residues 1–18 (MMQLAVLICLSLVVNTFA) form the signal peptide. 3 cysteine pairs are disulfide-bonded: cysteine 21–cysteine 34, cysteine 27–cysteine 39, and cysteine 33–cysteine 61.

As to expression, expressed by the venom gland.

The protein localises to the secreted. Its function is as follows. Probable ion channel inhibitor. This chain is U14-hexatoxin-Hi1a, found in Hadronyche infensa (Fraser island funnel-web spider).